The chain runs to 669 residues: Beta-galactosidase (669 aa).

Residues 1–24 form the signal peptide; sequence MDFPGAARLLSLLLVPLLLGPARG. Residues 25–29 constitute a propeptide that is removed on maturation; it reads LRNAS. N-linked (GlcNAc...) asparagine glycosylation occurs at N27. Substrate is bound by residues Y84, E130, and N188. E189 (proton donor) is an active-site residue. A disulfide bond links C196 and C231. An N-linked (GlcNAc...) asparagine glycan is attached at N248. E269 (nucleophile) is an active-site residue. Residue Y334 participates in substrate binding. N-linked (GlcNAc...) asparagine glycans are attached at residues N465, N499, N547, and N557. Residues C628 and C636 are joined by a disulfide bond. The disordered stretch occupies residues 649–669; it reads TPTSSHPLPDLSDRDSGWDRV. Residues 659–669 show a composition bias toward basic and acidic residues; it reads LSDRDSGWDRV.

The protein belongs to the glycosyl hydrolase 35 family. As to quaternary structure, homodimer. May form higher multimers.

The protein localises to the lysosome. The enzyme catalyses Hydrolysis of terminal non-reducing beta-D-galactose residues in beta-D-galactosides.. Cleaves beta-linked terminal galactosyl residues from gangliosides, glycoproteins, and glycosaminoglycans. This is Beta-galactosidase (GLB1) from Felis catus (Cat).